A 309-amino-acid chain; its full sequence is Taste receptor type 2 member 124 (309 aa).

Residues 1–7 are Extracellular-facing; the sequence is MVSVLHS. The chain crosses the membrane as a helical span at residues 8 to 28; it reads ISTIIIIAEFVWGNLSNGLIV. Residues 29 to 46 are Cytoplasmic-facing; sequence LKNCLDWINIKELSTLDQ. Residues 47-67 traverse the membrane as a helical segment; it reads ILILLAISRISLIWETLLMWV. At 68–81 the chain is on the extracellular side; that stretch reads KDKLISSITIEELK. Residues 82 to 102 traverse the membrane as a helical segment; the sequence is MIMFSFMLSSHFSLWLATALS. The Cytoplasmic portion of the chain corresponds to 103 to 127; that stretch reads TFYLFRIANCSWQIFLYLKWRLKHL. The chain crosses the membrane as a helical span at residues 128 to 148; the sequence is IVQMLLGSVMFLIANIIQITI. At 149-182 the chain is on the extracellular side; it reads TLEKRFYQYKGNTSVNSIQNEFALLIEMMLFNMT. Residues Asn-160 and Asn-180 are each glycosylated (N-linked (GlcNAc...) asparagine). The chain crosses the membrane as a helical span at residues 183–203; that stretch reads IFSVIPFLLALISFFLLIFSL. Residues 204-227 lie on the Cytoplasmic side of the membrane; sequence WKHLQRMQLNSREDRDPSTKAHRN. A helical transmembrane segment spans residues 228–248; it reads ALGIMVSFLLLYTMYVLSLLI. The Extracellular portion of the chain corresponds to 249–261; the sequence is SWIAQKNQSELVH. A glycan (N-linked (GlcNAc...) asparagine) is linked at Asn-255. A helical transmembrane segment spans residues 262 to 282; sequence IICMITSLLNPSVHSSILILG. The Cytoplasmic portion of the chain corresponds to 283-309; sequence NFKLKQSSLCILRHLGCRLKSQNTPTT.

The protein belongs to the G-protein coupled receptor T2R family.

The protein localises to the membrane. Putative taste receptor which may play a role in the perception of bitterness. This chain is Taste receptor type 2 member 124, found in Rattus norvegicus (Rat).